Reading from the N-terminus, the 126-residue chain is Fluoride-specific ion channel FluC (126 aa).

4 consecutive transmembrane segments (helical) span residues 5 to 25, 34 to 54, 67 to 87, and 95 to 115; these read IAVICLAACVGALMRWGFALW, WGTLAVNLIGGYCIGIALAVF, LVITGFLGTLTTFSSFSGEVV, and FGLAFGTIALHLGGSLALTWA. 2 residues coordinate Na(+): G74 and T77.

It belongs to the fluoride channel Fluc/FEX (TC 1.A.43) family.

The protein localises to the cell inner membrane. The enzyme catalyses fluoride(in) = fluoride(out). Its activity is regulated as follows. Na(+) is not transported, but it plays an essential structural role and its presence is essential for fluoride channel function. Functionally, fluoride-specific ion channel. Important for reducing fluoride concentration in the cell, thus reducing its toxicity. The sequence is that of Fluoride-specific ion channel FluC from Paracidovorax citrulli (strain AAC00-1) (Acidovorax citrulli).